We begin with the raw amino-acid sequence, 572 residues long: 2-isopropylmalate synthase (572 aa).

Residues 31-305 (PIWMSTDLRD…DPGLDFSNIN (275 aa)) enclose the Pyruvate carboxyltransferase domain. D40, H244, H246, and N280 together coordinate Mg(2+). The tract at residues 437–572 (NATPVHYVGH…MNDATESVGV (136 aa)) is regulatory domain.

Belongs to the alpha-IPM synthase/homocitrate synthase family. LeuA type 2 subfamily. As to quaternary structure, homodimer. It depends on Mg(2+) as a cofactor.

The protein resides in the cytoplasm. The catalysed reaction is 3-methyl-2-oxobutanoate + acetyl-CoA + H2O = (2S)-2-isopropylmalate + CoA + H(+). Its pathway is amino-acid biosynthesis; L-leucine biosynthesis; L-leucine from 3-methyl-2-oxobutanoate: step 1/4. Its function is as follows. Catalyzes the condensation of the acetyl group of acetyl-CoA with 3-methyl-2-oxobutanoate (2-ketoisovalerate) to form 3-carboxy-3-hydroxy-4-methylpentanoate (2-isopropylmalate). This is 2-isopropylmalate synthase from Paraburkholderia xenovorans (strain LB400).